The sequence spans 212 residues: uncharacterized protein (212 aa).

The N-terminal stretch at 1 to 18 (MQLTQVLAVAILAAGVSA) is a signal peptide. Residues 108–180 (VSHNRVNAKQ…KDYGHKDYGH (73 aa)) form a disordered region. A compositionally biased stretch (basic and acidic residues) spans 117–180 (QRRDDKKDYG…KDYGHKDYGH (64 aa)). Positions 120–210 (DDKKDYGKND…KDYGYKGYDD (91 aa)) are 15 X 5 AA tandem repeats of K-D-Y-G-H. The stretch at 123–127 (KDYGK) is repeat 1. Residues 128-132 (NDYGK) form a 2; truncated repeat. Tandem repeats lie at residues 133 to 137 (KDYGK), 138 to 142 (KDYGK), and 143 to 147 (KDYGK). The 6; truncated repeat unit spans residues 148–152 (KEYDP). 5 tandem repeats follow at residues 166–170 (KDYGH), 171–175 (KDYGH), 176–180 (KDYGH), 181–185 (KDYGH), and 186–190 (KDYGH). A 12; truncated repeat occupies 191–195 (DDYGY). Residues 196 to 200 (KGYDD) form a 13; truncated repeat. The stretch at 201 to 205 (KDYGY) is one 14; truncated repeat. One copy of the 15; truncated repeat lies at 206-210 (KGYDD).

The protein localises to the secreted. This is an uncharacterized protein from Arthroderma benhamiae (strain ATCC MYA-4681 / CBS 112371) (Trichophyton mentagrophytes).